The following is a 432-amino-acid chain: MVNVVLGSQWGDEGKGKLVDILVSHYDVVARCAGGNNAGHTIVVDGVKYDFHMLPSGLVNPNCKNLLGNGVVIHIPSFFKELETLESKGLNDARGRLFISSRAHLVFDFHQRTDKLRELELAGRSKDGKNIGTTGKGIGPTYSTKASRSGLRVHHLVNDNPGAWELFESRYRRLLETRKQRYGDFDYDAEEELNRFKQYKESLKPFVVDSVDFLHKSIANNEKILVEGANALMLDIDFGTYPYVTSSNTGIGGVITGLGIPPQKIQEVYGVVKAYTTRVGEGPFPTEQLNEQGEKLQSIGAEFGVTTGRKRRCGWLDLVLLKYSTLINGYTSLNITKLDVLDTFTEIPVGVSYKYKGETLNSFPEDLLTLGNVEVEYVTLPGWNQDITQIKKYDDLPENAKKYLKFIEDFVKVPVQWVGTGPARDSMLEKQI.

GTP is bound by residues Gly-11–Lys-17 and Gly-39–Thr-41. Catalysis depends on Asp-12, which acts as the Proton acceptor. Mg(2+)-binding residues include Asp-12 and Gly-39. IMP contacts are provided by residues Asp-12–Lys-15, Asn-37–His-40, Thr-134, Arg-148, Asn-230, Thr-245, and Arg-309. His-40 functions as the Proton donor in the catalytic mechanism. Val-305 to Arg-311 contacts substrate. Residues Arg-311, Lys-337 to Asp-339, and Gly-419 to Gly-421 each bind GTP.

It belongs to the adenylosuccinate synthetase family. In terms of assembly, homodimer. Mg(2+) serves as cofactor.

The protein resides in the cytoplasm. The enzyme catalyses IMP + L-aspartate + GTP = N(6)-(1,2-dicarboxyethyl)-AMP + GDP + phosphate + 2 H(+). The protein operates within purine metabolism; AMP biosynthesis via de novo pathway; AMP from IMP: step 1/2. In terms of biological role, plays an important role in the de novo pathway and in the salvage pathway of purine nucleotide biosynthesis. Catalyzes the first committed step in the biosynthesis of AMP from IMP. In Candida glabrata (strain ATCC 2001 / BCRC 20586 / JCM 3761 / NBRC 0622 / NRRL Y-65 / CBS 138) (Yeast), this protein is Adenylosuccinate synthetase.